Here is a 220-residue protein sequence, read N- to C-terminus: Ribosomal RNA large subunit methyltransferase E (220 aa).

Residues glycine 60, tryptophan 62, aspartate 92, aspartate 108, and aspartate 133 each contribute to the S-adenosyl-L-methionine site. Lysine 173 (proton acceptor) is an active-site residue.

This sequence belongs to the class I-like SAM-binding methyltransferase superfamily. RNA methyltransferase RlmE family.

The protein localises to the cytoplasm. The enzyme catalyses uridine(2552) in 23S rRNA + S-adenosyl-L-methionine = 2'-O-methyluridine(2552) in 23S rRNA + S-adenosyl-L-homocysteine + H(+). Functionally, specifically methylates the uridine in position 2552 of 23S rRNA at the 2'-O position of the ribose in the fully assembled 50S ribosomal subunit. The protein is Ribosomal RNA large subunit methyltransferase E of Paraburkholderia phymatum (strain DSM 17167 / CIP 108236 / LMG 21445 / STM815) (Burkholderia phymatum).